The following is a 205-amino-acid chain: Recombination protein RecR (205 aa).

A C4-type zinc finger spans residues 58-73; the sequence is CKKCHTISDHELCAIC. Residues 81 to 177 enclose the Toprim domain; sequence RVVCIVEDIR…KISTIARGIP (97 aa).

It belongs to the RecR family.

In terms of biological role, may play a role in DNA repair. It seems to be involved in an RecBC-independent recombinational process of DNA repair. It may act with RecF and RecO. In Cytophaga hutchinsonii (strain ATCC 33406 / DSM 1761 / CIP 103989 / NBRC 15051 / NCIMB 9469 / D465), this protein is Recombination protein RecR.